The chain runs to 76 residues: MKLTCLMIVAVLFLTAWTFVTAVPDSSNALENLYLKAHHEMNNPEDSELNKRCYDGGTSCNTGNQCCSGWCIFLCL.

A signal peptide spans 1 to 22; it reads MKLTCLMIVAVLFLTAWTFVTA. The propeptide occupies 23–50; that stretch reads VPDSSNALENLYLKAHHEMNNPEDSELN. 3 cysteine pairs are disulfide-bonded: cysteine 53–cysteine 67, cysteine 60–cysteine 71, and cysteine 66–cysteine 75.

Belongs to the conotoxin O1 superfamily. Expressed by the venom duct.

It localises to the secreted. Omega-conotoxins act at presynaptic membranes, they bind and block voltage-gated calcium channels (Cav). The polypeptide is Omega-conotoxin-like Ai6.3 (Conus ammiralis (Admiral cone)).